We begin with the raw amino-acid sequence, 467 residues long: tRNA-2-methylthio-N(6)-dimethylallyladenosine synthase (467 aa).

One can recognise an MTTase N-terminal domain in the interval 22-138 (GSYWITTFGC…LETLLNKVET (117 aa)). Residues Cys-31, Cys-67, Cys-101, Cys-173, Cys-177, and Cys-180 each contribute to the [4Fe-4S] cluster site. In terms of domain architecture, Radical SAM core spans 159–396 (RDSSICAWVN…NSLVEIKAKE (238 aa)). The TRAM domain maps to 399–467 (VRYKDRVEEV…AFSLSGVIEN (69 aa)).

Belongs to the methylthiotransferase family. MiaB subfamily. Monomer. Requires [4Fe-4S] cluster as cofactor.

Its subcellular location is the cytoplasm. The catalysed reaction is N(6)-dimethylallyladenosine(37) in tRNA + (sulfur carrier)-SH + AH2 + 2 S-adenosyl-L-methionine = 2-methylsulfanyl-N(6)-dimethylallyladenosine(37) in tRNA + (sulfur carrier)-H + 5'-deoxyadenosine + L-methionine + A + S-adenosyl-L-homocysteine + 2 H(+). Functionally, catalyzes the methylthiolation of N6-(dimethylallyl)adenosine (i(6)A), leading to the formation of 2-methylthio-N6-(dimethylallyl)adenosine (ms(2)i(6)A) at position 37 in tRNAs that read codons beginning with uridine. In Prochlorococcus marinus (strain MIT 9211), this protein is tRNA-2-methylthio-N(6)-dimethylallyladenosine synthase.